The chain runs to 297 residues: CASP-like protein 4A2 (297 aa).

Residues 1–20 are compositionally biased toward polar residues; that stretch reads MKMKRTASSNSEAQSYNESP. The tract at residues 1 to 135 is disordered; that stretch reads MKMKRTASSN…PINGEESTRT (135 aa). At 1–149 the chain is on the cytoplasmic side; it reads MKMKRTASSN…ARGDDLVSLT (149 aa). Pro residues predominate over residues 69–83; that stretch reads LPSPIPPPPPQFPPP. The chain crosses the membrane as a helical span at residues 150–170; it reads ALGFRITEVILCVISFSIMAA. The Extracellular portion of the chain corresponds to 171 to 191; that stretch reads DKTQGWSGDSYDRYKEYRYCL. A helical transmembrane segment spans residues 192–212; sequence AVNVIAFVYSAFEACDAACYI. Residues 213–225 are Cytoplasmic-facing; the sequence is AKESYMINCGFHD. The helical transmembrane segment at 226-246 threads the bilayer; it reads LFVFSMDQLLAYLLMSASSCA. At 247 to 265 the chain is on the extracellular side; it reads ATRVDDWVSNWGKDEFTQM. The chain crosses the membrane as a helical span at residues 266 to 286; that stretch reads ATASIAVSFLAFGAFAVSALI. Residues 287 to 297 are Cytoplasmic-facing; sequence SSYRLFTHASS.

It belongs to the Casparian strip membrane proteins (CASP) family. In terms of assembly, homodimer and heterodimers.

It is found in the cell membrane. This is CASP-like protein 4A2 from Arabidopsis thaliana (Mouse-ear cress).